Consider the following 726-residue polypeptide: Peroxisomal bifunctional enzyme (726 aa).

An enoyl-CoA hydratase / isomerase region spans residues Met-1 to Ser-284. Position 38 is an N6-succinyllysine (Lys-38). Residue Gly-103 coordinates substrate. The residue at position 167 (Lys-167) is an N6-acetyllysine; alternate. Lys-167 bears the N6-succinyllysine; alternate mark. Lys-173 bears the N6-acetyllysine mark. An N6-succinyllysine modification is found at Lys-185. Lys-221 carries the N6-acetyllysine; alternate modification. Lys-221 is modified (N6-succinyllysine; alternate). Lys-282, Lys-292, and Lys-333 each carry N6-succinyllysine. Residues Thr-285–Gly-575 form a 3-hydroxyacyl-CoA dehydrogenase region. Lys-348 and Lys-352 each carry N6-acetyllysine. The interval Lys-352–Ser-371 is disordered. A compositionally biased stretch (polar residues) spans Ser-353 to Ser-371. Lys-467 is subject to N6-acetyllysine. N6-succinyllysine is present on Lys-535. An N6-acetyllysine; alternate mark is found at Lys-587, Lys-594, and Lys-713. Residues Lys-587, Lys-594, and Lys-713 each carry the N6-succinyllysine; alternate modification. The Microbody targeting signal motif lies at Ser-724–Leu-726. Lys-725 carries the post-translational modification N6-succinyllysine.

The protein in the N-terminal section; belongs to the enoyl-CoA hydratase/isomerase family. It in the C-terminal section; belongs to the 3-hydroxyacyl-CoA dehydrogenase family. In terms of assembly, monomer. Acetylated, leading to enhanced enzyme activity. Acetylation is enhanced by up to 80% after treatment either with trichostin A (TSA) or with nicotinamide (NAM) with highest increase on Lys-348. Acetylation and enzyme activity increased by about 1.5% on addition of fatty acids.

The protein resides in the peroxisome. It carries out the reaction a (3S)-3-hydroxyacyl-CoA = a (2E)-enoyl-CoA + H2O. It catalyses the reaction a 4-saturated-(3S)-3-hydroxyacyl-CoA = a (3E)-enoyl-CoA + H2O. The catalysed reaction is a (3Z)-enoyl-CoA = a 4-saturated (2E)-enoyl-CoA. The enzyme catalyses a (3E)-enoyl-CoA = a 4-saturated (2E)-enoyl-CoA. It carries out the reaction a (3S)-3-hydroxyacyl-CoA + NAD(+) = a 3-oxoacyl-CoA + NADH + H(+). It catalyses the reaction (2S,3S)-3-hydroxy-2-methylbutanoyl-CoA = (2E)-2-methylbut-2-enoyl-CoA + H2O. The catalysed reaction is (3S)-hydroxyhexadecanoyl-CoA + NAD(+) = 3-oxohexadecanoyl-CoA + NADH + H(+). The enzyme catalyses (3S)-hydroxyhexadecanoyl-CoA = (2E)-hexadecenoyl-CoA + H2O. It carries out the reaction (2E)-hexadecenedioyl-CoA + H2O = (3S)-hydroxyhexadecanedioyl-CoA. It catalyses the reaction (3S)-hydroxyhexadecanedioyl-CoA + NAD(+) = 3-oxohexadecanedioyl-CoA + NADH + H(+). The catalysed reaction is (3E,5Z)-tetradecadienoyl-CoA = (2E,5Z)-tetradecadienoyl-CoA. The enzyme catalyses (3E,5Z)-octadienoyl-CoA = (2E,5Z)-octadienoyl-CoA. It carries out the reaction (3S)-hydroxydecanoyl-CoA + NAD(+) = 3-oxodecanoyl-CoA + NADH + H(+). It catalyses the reaction (3E)-decenoyl-CoA = (2E)-decenoyl-CoA. The catalysed reaction is (3Z)-hexenoyl-CoA = (2E)-hexenoyl-CoA. The enzyme catalyses (3E)-hexenoyl-CoA = (2E)-hexenoyl-CoA. It carries out the reaction (3S)-hydroxydecanoyl-CoA = (2E)-decenoyl-CoA + H2O. It catalyses the reaction (3S)-hydroxyhexanoyl-CoA = (2E)-hexenoyl-CoA + H2O. It participates in lipid metabolism; fatty acid beta-oxidation. Enzyme activity enhanced by acetylation. Peroxisomal trifunctional enzyme possessing 2-enoyl-CoA hydratase, 3-hydroxyacyl-CoA dehydrogenase, and delta 3, delta 2-enoyl-CoA isomerase activities. Catalyzes two of the four reactions of the long chain fatty acids peroxisomal beta-oxidation pathway. Can also use branched-chain fatty acids such as 2-methyl-2E-butenoyl-CoA as a substrate, which is hydrated into (2S,3S)-3-hydroxy-2-methylbutanoyl-CoA. Optimal isomerase for 2,5 double bonds into 3,5 form isomerization in a range of enoyl-CoA species. Also able to isomerize both 3-cis and 3-trans double bonds into the 2-trans form in a range of enoyl-CoA species. Regulates the amount of medium-chain dicarboxylic fatty acids which are essential regulators of all fatty acid oxidation pathways. Also involved in the degradation of long-chain dicarboxylic acids through peroxisomal beta-oxidation. This is Peroxisomal bifunctional enzyme (EHHADH) from Cavia porcellus (Guinea pig).